Consider the following 215-residue polypeptide: Ribonuclease T (215 aa).

The Exonuclease domain occupies 20–194; it reads VVIDVETAGF…YDTERTAVLF (175 aa). Mg(2+) contacts are provided by aspartate 23, glutamate 25, histidine 181, and aspartate 186. The Proton donor/acceptor role is filled by histidine 181.

It belongs to the RNase T family. In terms of assembly, homodimer. Requires Mg(2+) as cofactor.

Functionally, trims short 3' overhangs of a variety of RNA species, leaving a one or two nucleotide 3' overhang. Responsible for the end-turnover of tRNA: specifically removes the terminal AMP residue from uncharged tRNA (tRNA-C-C-A). Also appears to be involved in tRNA biosynthesis. The sequence is that of Ribonuclease T from Shigella boydii serotype 4 (strain Sb227).